We begin with the raw amino-acid sequence, 1140 residues long: uncharacterized protein (1140 aa).

Disordered regions lie at residues 1–49 (MGSS…TSPE), 97–243 (SSDI…STIS), 280–427 (TSSS…KSSV), 512–541 (ASST…DLSK), 702–747 (FSTP…STAS), 916–1059 (CPEK…PIGR), and 1080–1103 (LSSS…GTSS). Over residues 105 to 129 (VNDVESSTSGPSNSYSALSSTNAQL) the composition is skewed to polar residues. 3 stretches are compositionally biased toward low complexity: residues 130 to 154 (SSST…TSSS), 172 to 214 (TTAS…TTSD), and 221 to 243 (SSST…STIS). The segment covering 516–528 (LGSKVSSSNSRMA) has biased composition (polar residues). 2 stretches are compositionally biased toward low complexity: residues 529 to 541 (TSKT…DLSK) and 703 to 718 (STPE…VTSE). The span at 719–733 (APSTVSSMTTSAPFI) shows a compositional bias: polar residues. Residues 734 to 747 (NNSTSARPSPSTAS) are compositionally biased toward low complexity. The span at 949 to 961 (SFKDMKTSQETKK) shows a compositional bias: basic and acidic residues. Residues 977–997 (EKTSPTTKASPSTSPSESKAA) show a composition bias toward low complexity. Composition is skewed to polar residues over residues 998-1023 (GNTS…STSV), 1031-1055 (TKNS…STES), and 1089-1103 (RSTT…GTSS).

This is an uncharacterized protein from Saccharomyces cerevisiae (strain ATCC 204508 / S288c) (Baker's yeast).